Reading from the N-terminus, the 279-residue chain is Dihydropteroate synthase type-1 (279 aa).

Residues 1-258 (MVTVFGILNL…APGDLRSAIT (258 aa)) enclose the Pterin-binding domain. A Mg(2+)-binding site is contributed by N9. (7,8-dihydropterin-6-yl)methyl diphosphate is bound by residues D82, N101, D173, K212, and 246-248 (RTH).

The protein belongs to the DHPS family. In terms of assembly, homodimer or homotrimer. The cofactor is Mg(2+).

The enzyme catalyses (7,8-dihydropterin-6-yl)methyl diphosphate + 4-aminobenzoate = 7,8-dihydropteroate + diphosphate. It functions in the pathway cofactor biosynthesis; tetrahydrofolate biosynthesis; 7,8-dihydrofolate from 2-amino-4-hydroxy-6-hydroxymethyl-7,8-dihydropteridine diphosphate and 4-aminobenzoate: step 1/2. Its function is as follows. Catalyzes the condensation of para-aminobenzoate (pABA) with 6-hydroxymethyl-7,8-dihydropterin diphosphate (DHPt-PP) to form 7,8-dihydropteroate (H2Pte), the immediate precursor of folate derivatives. The sequence is that of Dihydropteroate synthase type-1 (sulI) from Corynebacterium glutamicum (Brevibacterium saccharolyticum).